We begin with the raw amino-acid sequence, 144 residues long: Snake venom vascular endothelial growth factor toxin cratrin (144 aa).

An N-terminal signal peptide occupies residues 1–24; sequence MAVYLLAVAILFCIQGWPSGTVQG. Gln-25 carries the pyrrolidone carboxylic acid modification. Disulfide bonds link Cys-38-Cys-80, Cys-69-Cys-115, and Cys-73-Cys-117. The segment at 119 to 144 is disordered; it reads PRSTVNNGKRKKNPKEGEPRAKFPLV. A compositionally biased stretch (basic and acidic residues) spans 132-144; it reads PKEGEPRAKFPLV.

It belongs to the PDGF/VEGF growth factor family. Snake venom VEGF subfamily. Homodimer; disulfide-linked. Interacts with VEGF receptor-1 (FLT1) with a high affinity, whereas it binds to VEGF receptor-2 (KDR) with a low affinity. Does not bind VEGF receptor-3 (FLT4). In terms of tissue distribution, expressed by the venom gland.

It localises to the secreted. In terms of biological role, snake venom VEGFs that may contribute to venom dispersion and prey subjugation by inducing vascular permeability and hypotension. This protein induces an increase in capillary permeability after intradermal injection, as well as a drastic hypotensive effect after intravenous injection. The hypotension is mediated by nitric oxide (NO), which is produced by VEGF-activated endothelium NO synthase. Also induces angiogenesis in vitro. Like other crotalid VEGFs, this protein interacts with VEGF receptor-1 (FLT1) with a high affinity, whereas it binds to VEGF receptor-2 (KDR) with a low affinity. The protein is Snake venom vascular endothelial growth factor toxin cratrin of Crotalus atrox (Western diamondback rattlesnake).